Consider the following 216-residue polypeptide: Large ribosomal subunit protein uL1 (216 aa).

It belongs to the universal ribosomal protein uL1 family.

The protein is Large ribosomal subunit protein uL1 of Caenorhabditis elegans.